The chain runs to 77 residues: Small ribosomal subunit protein uS17 (77 aa).

It belongs to the universal ribosomal protein uS17 family. As to quaternary structure, part of the 30S ribosomal subunit.

Its function is as follows. One of the primary rRNA binding proteins, it binds specifically to the 5'-end of 16S ribosomal RNA. This Rickettsia bellii (strain OSU 85-389) protein is Small ribosomal subunit protein uS17.